The primary structure comprises 131 residues: Putative pre-16S rRNA nuclease (131 aa).

Belongs to the YqgF nuclease family.

Its subcellular location is the cytoplasm. Its function is as follows. Could be a nuclease involved in processing of the 5'-end of pre-16S rRNA. This chain is Putative pre-16S rRNA nuclease, found in Bordetella petrii (strain ATCC BAA-461 / DSM 12804 / CCUG 43448).